The primary structure comprises 111 residues: BET1-like protein (111 aa).

The Cytoplasmic segment spans residues 1–86 (MADWTRAQSS…MARSGRDNRK (86 aa)). Phosphoserine is present on residues S9 and S37. The t-SNARE coiled-coil homology domain occupies 15-77 (DILDRENKRM…TGSVKRFSTM (63 aa)). A helical; Anchor for type IV membrane protein transmembrane segment spans residues 87 to 107 (LLCGMAVVLIVAFFILSYLLS). Topologically, residues 108–111 (RTRT) are lumenal.

In terms of assembly, component of a SNARE complex consisting of STX5, YKT6, GOSR1 and BET1L. Interacts with STX5.

The protein localises to the golgi apparatus membrane. It is found in the golgi apparatus. It localises to the trans-Golgi network membrane. Functionally, vesicle SNARE required for targeting and fusion of retrograde transport vesicles with the Golgi complex. Required for the integrity of the Golgi complex. The polypeptide is BET1-like protein (Mus musculus (Mouse)).